A 258-amino-acid polypeptide reads, in one-letter code: Ribosomal RNA small subunit methyltransferase A (258 aa).

Residues histidine 13, leucine 15, glycine 40, glutamate 61, aspartate 85, and asparagine 106 each coordinate S-adenosyl-L-methionine.

This sequence belongs to the class I-like SAM-binding methyltransferase superfamily. rRNA adenine N(6)-methyltransferase family. RsmA subfamily.

Its subcellular location is the cytoplasm. It catalyses the reaction adenosine(1518)/adenosine(1519) in 16S rRNA + 4 S-adenosyl-L-methionine = N(6)-dimethyladenosine(1518)/N(6)-dimethyladenosine(1519) in 16S rRNA + 4 S-adenosyl-L-homocysteine + 4 H(+). In terms of biological role, specifically dimethylates two adjacent adenosines (A1518 and A1519) in the loop of a conserved hairpin near the 3'-end of 16S rRNA in the 30S particle. May play a critical role in biogenesis of 30S subunits. This chain is Ribosomal RNA small subunit methyltransferase A, found in Porphyromonas gingivalis (strain ATCC 33277 / DSM 20709 / CIP 103683 / JCM 12257 / NCTC 11834 / 2561).